We begin with the raw amino-acid sequence, 120 residues long: ATP-dependent Clp protease adapter protein ClpS (120 aa).

The tract at residues 1–25 (MHARSEIRLTFNQDRPQSNEDDGSG) is disordered.

Belongs to the ClpS family. Binds to the N-terminal domain of the chaperone ClpA.

Involved in the modulation of the specificity of the ClpAP-mediated ATP-dependent protein degradation. The polypeptide is ATP-dependent Clp protease adapter protein ClpS (Pseudomonas putida (strain W619)).